We begin with the raw amino-acid sequence, 512 residues long: Cytochrome P450 26B1 (512 aa).

C441 contributes to the heme binding site.

This sequence belongs to the cytochrome P450 family. Requires heme as cofactor.

It is found in the endoplasmic reticulum membrane. The protein localises to the microsome membrane. It catalyses the reaction all-trans-retinoate + reduced [NADPH--hemoprotein reductase] + O2 = all-trans-4-hydroxyretinoate + oxidized [NADPH--hemoprotein reductase] + H2O + H(+). The catalysed reaction is all-trans-retinoate + reduced [NADPH--hemoprotein reductase] + O2 = all-trans-18-hydroxyretinoate + oxidized [NADPH--hemoprotein reductase] + H2O + H(+). Its function is as follows. A cytochrome P450 monooxygenase involved in the metabolism of retinoates (RAs), the active metabolites of vitamin A, and critical signaling molecules in animals. RAs exist as at least four different isomers: all-trans-RA (atRA), 9-cis-RA, 13-cis-RA, and 9,13-dicis-RA, where atRA is considered to be the biologically active isomer, although 9-cis-RA and 13-cis-RA also have activity. Catalyzes the hydroxylation of atRA primarily at C-4 and C-18, thereby contributing to the regulation of atRA homeostasis and signaling. Hydroxylation of atRA limits its biological activity and initiates a degradative process leading to its eventual elimination. Involved in the convertion of atRA to all-trans-4-oxo-RA. Can oxidize all-trans-13,14-dihydroretinoate (DRA) to metabolites which could include all-trans-4-oxo-DRA, all-trans-4-hydroxy-DRA, all-trans-5,8-epoxy-DRA, and all-trans-18-hydroxy-DRA. Shows preference for the following substrates: atRA &gt; 9-cis-RA &gt; 13-cis-RA. Plays a central role in germ cell development: acts by degrading RAs in the developing testis, preventing STRA8 expression, thereby leading to delay of meiosis. Required for the maintenance of the undifferentiated state of male germ cells during embryonic development in Sertoli cells, inducing arrest in G0 phase of the cell cycle and preventing meiotic entry. Plays a role in skeletal development, both at the level of patterning and in the ossification of bone and the establishment of some synovial joints. Essential for postnatal survival. Also has a significant activity in oxidation of tazarotenic acid and may therefore metabolize that xenobiotic in vivo. The polypeptide is Cytochrome P450 26B1 (Cyp26b1) (Rattus norvegicus (Rat)).